Here is a 245-residue protein sequence, read N- to C-terminus: 1-(5-phosphoribosyl)-5-[(5-phosphoribosylamino)methylideneamino] imidazole-4-carboxamide isomerase (245 aa).

D7 (proton acceptor) is an active-site residue. The active-site Proton donor is the D129.

This sequence belongs to the HisA/HisF family.

The protein resides in the cytoplasm. The enzyme catalyses 1-(5-phospho-beta-D-ribosyl)-5-[(5-phospho-beta-D-ribosylamino)methylideneamino]imidazole-4-carboxamide = 5-[(5-phospho-1-deoxy-D-ribulos-1-ylimino)methylamino]-1-(5-phospho-beta-D-ribosyl)imidazole-4-carboxamide. The protein operates within amino-acid biosynthesis; L-histidine biosynthesis; L-histidine from 5-phospho-alpha-D-ribose 1-diphosphate: step 4/9. This Klebsiella pneumoniae subsp. pneumoniae (strain ATCC 700721 / MGH 78578) protein is 1-(5-phosphoribosyl)-5-[(5-phosphoribosylamino)methylideneamino] imidazole-4-carboxamide isomerase.